Reading from the N-terminus, the 100-residue chain is NADH-quinone oxidoreductase subunit K 2 (100 aa).

The next 3 membrane-spanning stretches (helical) occupy residues L2–V22, I29–F49, and F61–I81.

Belongs to the complex I subunit 4L family. NDH-1 is composed of 14 different subunits. Subunits NuoA, H, J, K, L, M, N constitute the membrane sector of the complex.

It is found in the cell inner membrane. The catalysed reaction is a quinone + NADH + 5 H(+)(in) = a quinol + NAD(+) + 4 H(+)(out). Functionally, NDH-1 shuttles electrons from NADH, via FMN and iron-sulfur (Fe-S) centers, to quinones in the respiratory chain. The immediate electron acceptor for the enzyme in this species is believed to be ubiquinone. Couples the redox reaction to proton translocation (for every two electrons transferred, four hydrogen ions are translocated across the cytoplasmic membrane), and thus conserves the redox energy in a proton gradient. The polypeptide is NADH-quinone oxidoreductase subunit K 2 (Citrifermentans bemidjiense (strain ATCC BAA-1014 / DSM 16622 / JCM 12645 / Bem) (Geobacter bemidjiensis)).